The sequence spans 605 residues: Elongation factor 4 (605 aa).

One can recognise a tr-type G domain in the interval 9–192; that stretch reads GMIRNFCIIA…AIVQRIPAPA (184 aa). GTP-binding positions include 21–26 and 139–142; these read DHGKST and NKID.

Belongs to the TRAFAC class translation factor GTPase superfamily. Classic translation factor GTPase family. LepA subfamily.

It is found in the cell inner membrane. The enzyme catalyses GTP + H2O = GDP + phosphate + H(+). In terms of biological role, required for accurate and efficient protein synthesis under certain stress conditions. May act as a fidelity factor of the translation reaction, by catalyzing a one-codon backward translocation of tRNAs on improperly translocated ribosomes. Back-translocation proceeds from a post-translocation (POST) complex to a pre-translocation (PRE) complex, thus giving elongation factor G a second chance to translocate the tRNAs correctly. Binds to ribosomes in a GTP-dependent manner. This Chlorobaculum parvum (strain DSM 263 / NCIMB 8327) (Chlorobium vibrioforme subsp. thiosulfatophilum) protein is Elongation factor 4.